The following is a 141-amino-acid chain: Large ribosomal subunit protein uL16m (141 aa).

The protein belongs to the universal ribosomal protein uL16 family.

The protein resides in the mitochondrion. This is Large ribosomal subunit protein uL16m (RPL16) from Acanthamoeba castellanii (Amoeba).